A 476-amino-acid polypeptide reads, in one-letter code: Inactive glucose-1-phosphate adenylyltransferase small subunit 2, chloroplastic (476 aa).

A chloroplast-targeting transit peptide spans 1-55 (MQISSSSFITKFTNLHMVRSTSDHHQWRHNYNLKQLFIPNLSVSNSQHLPLNQSV).

The protein belongs to the bacterial/plant glucose-1-phosphate adenylyltransferase family. In terms of assembly, heterotetramer. In terms of tissue distribution, expressed at very low levels in leaves, inflorescences, fruits, and roots.

The protein resides in the plastid. It is found in the chloroplast. This Arabidopsis thaliana (Mouse-ear cress) protein is Inactive glucose-1-phosphate adenylyltransferase small subunit 2, chloroplastic.